The sequence spans 364 residues: Mannonate dehydratase (364 aa).

Belongs to the mannonate dehydratase family. Fe(2+) is required as a cofactor. Requires Mn(2+) as cofactor.

The catalysed reaction is D-mannonate = 2-dehydro-3-deoxy-D-gluconate + H2O. The protein operates within carbohydrate metabolism; pentose and glucuronate interconversion. Catalyzes the dehydration of D-mannonate. The polypeptide is Mannonate dehydratase (Streptococcus equi subsp. zooepidemicus (strain MGCS10565)).